The primary structure comprises 371 residues: Putative glutamate--cysteine ligase 2 (371 aa).

It belongs to the glutamate--cysteine ligase type 2 family. YbdK subfamily.

The enzyme catalyses L-cysteine + L-glutamate + ATP = gamma-L-glutamyl-L-cysteine + ADP + phosphate + H(+). In terms of biological role, ATP-dependent carboxylate-amine ligase which exhibits weak glutamate--cysteine ligase activity. The polypeptide is Putative glutamate--cysteine ligase 2 (Burkholderia mallei (strain NCTC 10247)).